A 424-amino-acid polypeptide reads, in one-letter code: Adenylosuccinate synthetase (424 aa).

Residues 12 to 18 (GDEGKGK) and 40 to 42 (GHT) contribute to the GTP site. Asp-13 acts as the Proton acceptor in catalysis. Mg(2+) contacts are provided by Asp-13 and Gly-40. IMP contacts are provided by residues 13–16 (DEGK), 38–41 (NAGH), Thr-130, Arg-144, Asn-220, Thr-235, and Arg-299. The active-site Proton donor is the His-41. 295–301 (VTTGRRR) provides a ligand contact to substrate. Residues Arg-301, 327–329 (KLD), and 412–414 (GTG) contribute to the GTP site.

This sequence belongs to the adenylosuccinate synthetase family. In terms of assembly, homodimer. Mg(2+) serves as cofactor.

The protein resides in the cytoplasm. It catalyses the reaction IMP + L-aspartate + GTP = N(6)-(1,2-dicarboxyethyl)-AMP + GDP + phosphate + 2 H(+). The protein operates within purine metabolism; AMP biosynthesis via de novo pathway; AMP from IMP: step 1/2. Its function is as follows. Plays an important role in the de novo pathway and in the salvage pathway of purine nucleotide biosynthesis. Catalyzes the first committed step in the biosynthesis of AMP from IMP. This chain is Adenylosuccinate synthetase, found in Aspergillus fumigatus (strain CBS 144.89 / FGSC A1163 / CEA10) (Neosartorya fumigata).